Reading from the N-terminus, the 1057-residue chain is Self-sufficient cytochrome P450 monooxygenase CYP505E3 (1057 aa).

Cys-403 contacts heme. Positions 465–488 (PSAAPFSSHARETTNASLPASPGT) are disordered. The Flavodoxin-like domain maps to 494–634 (MYVLYGSNTG…AFEAWETKLW (141 aa)). FMN contacts are provided by residues 500–504 (SNTGT) and 578–610 (VFGCGHHDWFRTYQRIPKLIDQTLEDRGAQRLV). In terms of domain architecture, FAD-binding FR-type spans 671 to 900 (HDAALGTVIE…RASNAAFHLP (230 aa)).

It in the N-terminal section; belongs to the cytochrome P450 family. FAD serves as cofactor. FMN is required as a cofactor. It depends on heme as a cofactor.

It carries out the reaction 2 oxidized [cytochrome P450] + NADPH = 2 reduced [cytochrome P450] + NADP(+) + H(+). The enzyme catalyses an organic molecule + reduced [NADPH--hemoprotein reductase] + O2 = an alcohol + oxidized [NADPH--hemoprotein reductase] + H2O + H(+). The catalysed reaction is dodecan-1-ol + reduced [NADPH--hemoprotein reductase] + O2 = 1,5-dodecanediol + oxidized [NADPH--hemoprotein reductase] + H2O + H(+). It catalyses the reaction dodecan-1-ol + reduced [NADPH--hemoprotein reductase] + O2 = 1,6-dodecanediol + oxidized [NADPH--hemoprotein reductase] + H2O + H(+). Self-sufficient cytochrome P450 monooxygenase that catalyzes the regioselective in-chain hydroxylation of fatty alcohols (C9-15) as well as fatty acids (C9-15) at the omega-1 to omega-7 or omega-1 to omega-6 positions, respectively. Is also able to convert naphthalene to 1-naphthol and 1-naphthol further to 1,3-dihydroxynaphthalene. This chain is Self-sufficient cytochrome P450 monooxygenase CYP505E3, found in Phanerodontia chrysosporium (White-rot fungus).